Reading from the N-terminus, the 115-residue chain is Glutaredoxin-like protein C5orf63 homolog (115 aa).

Cysteines 40 and 43 form a disulfide.

The protein belongs to the glutaredoxin family. YDR286C subfamily.

This Mus musculus (Mouse) protein is Glutaredoxin-like protein C5orf63 homolog.